The sequence spans 235 residues: Phosphoribosylformylglycinamidine synthase subunit PurQ (235 aa).

The region spanning 5–235 (FGVVVFPGSN…LLNHVSIVAA (231 aa)) is the Glutamine amidotransferase type-1 domain. Cys88 serves as the catalytic Nucleophile. Residues His205 and Glu207 contribute to the active site.

Part of the FGAM synthase complex composed of 1 PurL, 1 PurQ and 2 PurS subunits.

It is found in the cytoplasm. It carries out the reaction N(2)-formyl-N(1)-(5-phospho-beta-D-ribosyl)glycinamide + L-glutamine + ATP + H2O = 2-formamido-N(1)-(5-O-phospho-beta-D-ribosyl)acetamidine + L-glutamate + ADP + phosphate + H(+). The enzyme catalyses L-glutamine + H2O = L-glutamate + NH4(+). Its pathway is purine metabolism; IMP biosynthesis via de novo pathway; 5-amino-1-(5-phospho-D-ribosyl)imidazole from N(2)-formyl-N(1)-(5-phospho-D-ribosyl)glycinamide: step 1/2. Part of the phosphoribosylformylglycinamidine synthase complex involved in the purines biosynthetic pathway. Catalyzes the ATP-dependent conversion of formylglycinamide ribonucleotide (FGAR) and glutamine to yield formylglycinamidine ribonucleotide (FGAM) and glutamate. The FGAM synthase complex is composed of three subunits. PurQ produces an ammonia molecule by converting glutamine to glutamate. PurL transfers the ammonia molecule to FGAR to form FGAM in an ATP-dependent manner. PurS interacts with PurQ and PurL and is thought to assist in the transfer of the ammonia molecule from PurQ to PurL. The polypeptide is Phosphoribosylformylglycinamidine synthase subunit PurQ (Salinibacter ruber (strain DSM 13855 / M31)).